Consider the following 456-residue polypeptide: Bifunctional protein GlmU (456 aa).

A pyrophosphorylase region spans residues 1-228 (MSARLAAIVL…PQEIFGINDR (228 aa)). UDP-N-acetyl-alpha-D-glucosamine is bound by residues 10–13 (LAAG), lysine 24, glutamine 75, and 80–81 (GT). Aspartate 105 serves as a coordination point for Mg(2+). Positions 142, 157, 172, and 226 each coordinate UDP-N-acetyl-alpha-D-glucosamine. Asparagine 226 contributes to the Mg(2+) binding site. The tract at residues 229-249 (LQLSQASRILNERTLVGLMLS) is linker. An N-acetyltransferase region spans residues 250 to 456 (GVTIVDPLRV…KAPYERTEDG (207 aa)). UDP-N-acetyl-alpha-D-glucosamine is bound by residues arginine 331 and lysine 349. Residue histidine 361 is the Proton acceptor of the active site. Positions 364 and 375 each coordinate UDP-N-acetyl-alpha-D-glucosamine. Acetyl-CoA contacts are provided by residues alanine 378, 384–385 (NY), alanine 421, and arginine 437.

This sequence in the N-terminal section; belongs to the N-acetylglucosamine-1-phosphate uridyltransferase family. It in the C-terminal section; belongs to the transferase hexapeptide repeat family. In terms of assembly, homotrimer. Mg(2+) is required as a cofactor.

It localises to the cytoplasm. It carries out the reaction alpha-D-glucosamine 1-phosphate + acetyl-CoA = N-acetyl-alpha-D-glucosamine 1-phosphate + CoA + H(+). The catalysed reaction is N-acetyl-alpha-D-glucosamine 1-phosphate + UTP + H(+) = UDP-N-acetyl-alpha-D-glucosamine + diphosphate. It participates in nucleotide-sugar biosynthesis; UDP-N-acetyl-alpha-D-glucosamine biosynthesis; N-acetyl-alpha-D-glucosamine 1-phosphate from alpha-D-glucosamine 6-phosphate (route II): step 2/2. The protein operates within nucleotide-sugar biosynthesis; UDP-N-acetyl-alpha-D-glucosamine biosynthesis; UDP-N-acetyl-alpha-D-glucosamine from N-acetyl-alpha-D-glucosamine 1-phosphate: step 1/1. It functions in the pathway bacterial outer membrane biogenesis; LPS lipid A biosynthesis. Catalyzes the last two sequential reactions in the de novo biosynthetic pathway for UDP-N-acetylglucosamine (UDP-GlcNAc). The C-terminal domain catalyzes the transfer of acetyl group from acetyl coenzyme A to glucosamine-1-phosphate (GlcN-1-P) to produce N-acetylglucosamine-1-phosphate (GlcNAc-1-P), which is converted into UDP-GlcNAc by the transfer of uridine 5-monophosphate (from uridine 5-triphosphate), a reaction catalyzed by the N-terminal domain. This is Bifunctional protein GlmU from Gloeobacter violaceus (strain ATCC 29082 / PCC 7421).